Reading from the N-terminus, the 152-residue chain is Nucleoside diphosphate kinase B (152 aa).

The interaction with AKAP13 stretch occupies residues 1-66; it reads MANLERTFIA…DRPFFPGLVK (66 aa). The ATP site is built by Lys-12, Phe-60, Arg-88, Thr-94, Arg-105, and Asn-115. The active-site Pros-phosphohistidine intermediate is His-118.

The protein belongs to the NDK family. In terms of assembly, hexamer of two different chains: An and B (A6, A5B, A4B2, A3B3, A2B4, AB5, B6). Interacts with CAPN8. Interacts with AKAP13. Interacts with ITGB1BP1 (via C-terminal domain region). Interacts with BCL2L10. Requires Mg(2+) as cofactor. The N-terminus is blocked.

The protein localises to the cytoplasm. It is found in the cell projection. It localises to the lamellipodium. Its subcellular location is the ruffle. The protein resides in the nucleus. It carries out the reaction a 2'-deoxyribonucleoside 5'-diphosphate + ATP = a 2'-deoxyribonucleoside 5'-triphosphate + ADP. The catalysed reaction is a ribonucleoside 5'-diphosphate + ATP = a ribonucleoside 5'-triphosphate + ADP. The enzyme catalyses ATP + protein L-histidine = ADP + protein N-phospho-L-histidine.. Its function is as follows. Major role in the synthesis of nucleoside triphosphates other than ATP. The ATP gamma phosphate is transferred to the NDP beta phosphate via a ping-pong mechanism, using a phosphorylated active-site intermediate. Negatively regulates Rho activity by interacting with AKAP13/LBC. Acts as a transcriptional activator of the MYC gene; binds DNA non-specifically. Binds to both single-stranded guanine- and cytosine-rich strands within the nuclease hypersensitive element (NHE) III(1) region of the MYC gene promoter. Does not bind to duplex NHE III(1). Has G-quadruplex (G4) DNA-binding activity, which is independent of its nucleotide-binding and kinase activity. Binds both folded and unfolded G4 with similar low nanomolar affinities. Stabilizes folded G4s regardless of whether they are prefolded or not. Exhibits histidine protein kinase activity. The polypeptide is Nucleoside diphosphate kinase B (Nme2) (Rattus norvegicus (Rat)).